The following is a 127-amino-acid chain: uncharacterized protein (127 aa).

It belongs to the transcriptional regulatory CopG/NikR family.

This is an uncharacterized protein from Methanocaldococcus jannaschii (strain ATCC 43067 / DSM 2661 / JAL-1 / JCM 10045 / NBRC 100440) (Methanococcus jannaschii).